The chain runs to 520 residues: L-cysteine:1D-myo-inositol 2-amino-2-deoxy-alpha-D-glucopyranoside ligase (520 aa).

Position 48 (C48) interacts with Zn(2+). L-cysteinyl-5'-AMP is bound by residues 48-51 (CGIT), T63, and 86-88 (NVT). The short motif at 50–60 (ITPYDSTHLGH) is the 'HIGH' region element. A 'ERGGDP' region motif is present at residues 192-197 (ERGGDP). W232 contacts L-cysteinyl-5'-AMP. Residue C236 coordinates Zn(2+). 254-256 (GED) contacts L-cysteinyl-5'-AMP. H261 contributes to the Zn(2+) binding site. I288 provides a ligand contact to L-cysteinyl-5'-AMP. A 'KMSKS' region motif is present at residues 294-298 (KMSKS).

Belongs to the class-I aminoacyl-tRNA synthetase family. MshC subfamily. In terms of assembly, monomer. Requires Zn(2+) as cofactor.

It catalyses the reaction 1D-myo-inositol 2-amino-2-deoxy-alpha-D-glucopyranoside + L-cysteine + ATP = 1D-myo-inositol 2-(L-cysteinylamino)-2-deoxy-alpha-D-glucopyranoside + AMP + diphosphate + H(+). Catalyzes the ATP-dependent condensation of GlcN-Ins and L-cysteine to form L-Cys-GlcN-Ins. This chain is L-cysteine:1D-myo-inositol 2-amino-2-deoxy-alpha-D-glucopyranoside ligase, found in Corynebacterium kroppenstedtii (strain DSM 44385 / JCM 11950 / CIP 105744 / CCUG 35717).